Here is a 103-residue protein sequence, read N- to C-terminus: N(4)-acetylcytidine amidohydrolase (103 aa).

The ASCH domain occupies 6-100; the sequence is ITFFQRFQED…AEDRFYVIEF (95 aa). The active-site Proton acceptor is lysine 21. Threonine 24 functions as the Nucleophile in the catalytic mechanism. Glutamate 74 (proton donor) is an active-site residue.

Belongs to the N(4)-acetylcytidine amidohydrolase family.

The enzyme catalyses N(4)-acetylcytidine + H2O = cytidine + acetate + H(+). The catalysed reaction is N(4)-acetyl-2'-deoxycytidine + H2O = 2'-deoxycytidine + acetate + H(+). It carries out the reaction N(4)-acetylcytosine + H2O = cytosine + acetate + H(+). Its function is as follows. Catalyzes the hydrolysis of N(4)-acetylcytidine (ac4C). This chain is N(4)-acetylcytidine amidohydrolase, found in Klebsiella pneumoniae (strain 342).